The sequence spans 288 residues: 33 kDa chaperonin (288 aa).

2 disulfide bridges follow: Cys-236-Cys-238 and Cys-269-Cys-272.

This sequence belongs to the HSP33 family. Under oxidizing conditions two disulfide bonds are formed involving the reactive cysteines. Under reducing conditions zinc is bound to the reactive cysteines and the protein is inactive.

It is found in the cytoplasm. Its function is as follows. Redox regulated molecular chaperone. Protects both thermally unfolding and oxidatively damaged proteins from irreversible aggregation. Plays an important role in the bacterial defense system toward oxidative stress. This Syntrophotalea carbinolica (strain DSM 2380 / NBRC 103641 / GraBd1) (Pelobacter carbinolicus) protein is 33 kDa chaperonin.